A 308-amino-acid polypeptide reads, in one-letter code: Coenzyme PQQ synthesis protein B (308 aa).

It belongs to the PqqB family.

Its pathway is cofactor biosynthesis; pyrroloquinoline quinone biosynthesis. Its function is as follows. May be involved in the transport of PQQ or its precursor to the periplasm. The sequence is that of Coenzyme PQQ synthesis protein B from Klebsiella pneumoniae subsp. pneumoniae (strain ATCC 700721 / MGH 78578).